The sequence spans 130 residues: Small ribosomal subunit protein uS9 (130 aa).

This sequence belongs to the universal ribosomal protein uS9 family.

In Streptococcus mutans serotype c (strain ATCC 700610 / UA159), this protein is Small ribosomal subunit protein uS9.